We begin with the raw amino-acid sequence, 416 residues long: Multifunctional CCA protein (416 aa).

ATP is bound by residues Gly8 and Arg11. Positions 8 and 11 each coordinate CTP. Residues Asp21 and Asp23 each contribute to the Mg(2+) site. Residues Arg91, Arg137, and Arg140 each contribute to the ATP site. 3 residues coordinate CTP: Arg91, Arg137, and Arg140. One can recognise an HD domain in the interval Thr228–Trp329.

This sequence belongs to the tRNA nucleotidyltransferase/poly(A) polymerase family. Bacterial CCA-adding enzyme type 1 subfamily. Monomer. Can also form homodimers and oligomers. Mg(2+) is required as a cofactor. The cofactor is Ni(2+).

It catalyses the reaction a tRNA precursor + 2 CTP + ATP = a tRNA with a 3' CCA end + 3 diphosphate. The enzyme catalyses a tRNA with a 3' CCA end + 2 CTP + ATP = a tRNA with a 3' CCACCA end + 3 diphosphate. Its function is as follows. Catalyzes the addition and repair of the essential 3'-terminal CCA sequence in tRNAs without using a nucleic acid template. Adds these three nucleotides in the order of C, C, and A to the tRNA nucleotide-73, using CTP and ATP as substrates and producing inorganic pyrophosphate. tRNA 3'-terminal CCA addition is required both for tRNA processing and repair. Also involved in tRNA surveillance by mediating tandem CCA addition to generate a CCACCA at the 3' terminus of unstable tRNAs. While stable tRNAs receive only 3'-terminal CCA, unstable tRNAs are marked with CCACCA and rapidly degraded. The chain is Multifunctional CCA protein from Shewanella baltica (strain OS223).